The chain runs to 97 residues: DNA/RNA-binding protein Alba (97 aa).

Lys15 carries the N6-acetyllysine modification.

It belongs to the histone-like Alba family. Post-translationally, acetylated. Acetylation at Lys-15 decreases DNA-binding affinity.

The protein resides in the cytoplasm. It is found in the chromosome. Binds double-stranded DNA tightly but without sequence specificity. Involved in DNA compaction. This Sulfolobus acidocaldarius (strain ATCC 33909 / DSM 639 / JCM 8929 / NBRC 15157 / NCIMB 11770) protein is DNA/RNA-binding protein Alba.